A 490-amino-acid polypeptide reads, in one-letter code: Cytochrome P450 2C2 (490 aa).

Heme is bound at residue C435.

Belongs to the cytochrome P450 family. Requires heme as cofactor.

The protein resides in the endoplasmic reticulum membrane. Its subcellular location is the microsome membrane. It carries out the reaction an organic molecule + reduced [NADPH--hemoprotein reductase] + O2 = an alcohol + oxidized [NADPH--hemoprotein reductase] + H2O + H(+). Cytochromes P450 are a group of heme-thiolate monooxygenases. In liver microsomes, this enzyme is involved in an NADPH-dependent electron transport pathway. It oxidizes a variety of structurally unrelated compounds, including steroids, fatty acids, and xenobiotics. In the epoxidation of arachidonic acid it generates only 14,15- and 11,12-cis-epoxyeicosatrienoic acids. In Oryctolagus cuniculus (Rabbit), this protein is Cytochrome P450 2C2 (CYP2C2).